The chain runs to 71 residues: UPF0346 protein BCQ_2236 (71 aa).

It belongs to the UPF0346 family.

The protein is UPF0346 protein BCQ_2236 of Bacillus cereus (strain Q1).